A 161-amino-acid chain; its full sequence is Transcription antitermination protein NusB (161 aa).

The protein belongs to the NusB family.

Involved in transcription antitermination. Required for transcription of ribosomal RNA (rRNA) genes. Binds specifically to the boxA antiterminator sequence of the ribosomal RNA (rrn) operons. The sequence is that of Transcription antitermination protein NusB from Syntrophus aciditrophicus (strain SB).